Reading from the N-terminus, the 241-residue chain is MIRLLNNFNFSEIDNADPAQWCRLFQEAAAEFDVLLSDAQLNRFLMYYRELKFWNSRINLIASAESVTDIVIKHFLDSLTLIPCIPFPDGRLIDIGTGGGFPGIPLKIALNSLKVTLLEASRKKVSFLKSLRRVLNLQDMKILNERVEDLITQAPCPNRFDMVVSRAALKLPEYLRFGKELVSSHGVIIAMKGANYQHELEDVNDILEEYGIFLAEVRSLALPCTGDFRAILIFRKSLSRT.

S-adenosyl-L-methionine is bound by residues G96, F101, 119-121 (EAS), 147-148 (VE), and R166.

It belongs to the methyltransferase superfamily. RNA methyltransferase RsmG family.

The protein localises to the cytoplasm. The catalysed reaction is guanosine(527) in 16S rRNA + S-adenosyl-L-methionine = N(7)-methylguanosine(527) in 16S rRNA + S-adenosyl-L-homocysteine. Specifically methylates the N7 position of guanine in position 527 of 16S rRNA. In Syntrophus aciditrophicus (strain SB), this protein is Ribosomal RNA small subunit methyltransferase G.